A 153-amino-acid chain; its full sequence is Actin-related protein 2/3 complex subunit 5-like protein (153 aa).

At Ser-64 the chain carries Phosphoserine.

Belongs to the ARPC5 family. In terms of assembly, may be a component of the Arp2/3 complex in which it may replace ARPC5.

The protein resides in the cytoplasm. It is found in the cytoskeleton. May function as component of the Arp2/3 complex which is involved in regulation of actin polymerization and together with an activating nucleation-promoting factor (NPF) mediates the formation of branched actin networks. The sequence is that of Actin-related protein 2/3 complex subunit 5-like protein (Arpc5l) from Rattus norvegicus (Rat).